A 471-amino-acid chain; its full sequence is A-type ATP synthase subunit B (471 aa).

The protein belongs to the ATPase alpha/beta chains family. As to quaternary structure, has multiple subunits with at least A(3), B(3), C, D, E, F, H, I and proteolipid K(x).

It is found in the cell membrane. Its function is as follows. Component of the A-type ATP synthase that produces ATP from ADP in the presence of a proton gradient across the membrane. The B chain is a regulatory subunit. This chain is A-type ATP synthase subunit B, found in Ignicoccus hospitalis (strain KIN4/I / DSM 18386 / JCM 14125).